The sequence spans 462 residues: ATP synthase subunit beta (462 aa).

151–158 (GGAGVGKT) lines the ATP pocket.

Belongs to the ATPase alpha/beta chains family. F-type ATPases have 2 components, CF(1) - the catalytic core - and CF(0) - the membrane proton channel. CF(1) has five subunits: alpha(3), beta(3), gamma(1), delta(1), epsilon(1). CF(0) has four main subunits: a(1), b(1), b'(1) and c(9-12).

The protein resides in the cell inner membrane. It carries out the reaction ATP + H2O + 4 H(+)(in) = ADP + phosphate + 5 H(+)(out). Produces ATP from ADP in the presence of a proton gradient across the membrane. The catalytic sites are hosted primarily by the beta subunits. The sequence is that of ATP synthase subunit beta from Pelodictyon phaeoclathratiforme (strain DSM 5477 / BU-1).